The following is a 210-amino-acid chain: Ribosomal RNA large subunit methyltransferase E (210 aa).

Residues glycine 64, tryptophan 66, aspartate 84, aspartate 100, and aspartate 125 each contribute to the S-adenosyl-L-methionine site. Lysine 165 acts as the Proton acceptor in catalysis.

It belongs to the class I-like SAM-binding methyltransferase superfamily. RNA methyltransferase RlmE family.

It is found in the cytoplasm. It carries out the reaction uridine(2552) in 23S rRNA + S-adenosyl-L-methionine = 2'-O-methyluridine(2552) in 23S rRNA + S-adenosyl-L-homocysteine + H(+). Functionally, specifically methylates the uridine in position 2552 of 23S rRNA at the 2'-O position of the ribose in the fully assembled 50S ribosomal subunit. The chain is Ribosomal RNA large subunit methyltransferase E from Chromohalobacter salexigens (strain ATCC BAA-138 / DSM 3043 / CIP 106854 / NCIMB 13768 / 1H11).